A 288-amino-acid chain; its full sequence is MGIRVYRPYTPGVRQKTVSDFAEITTDKPEKSLTRGFKRDKGRNNRGVITSRRRGGGHKRRYRIVDFRRSSKLNIPAKVATVEYDPNRNARIALLHYRDGEKRYILHPRDLTPGTEIIASPDAPIEVGNALPLGKIPLGTSVHNVEITPGRGAQMVRAAGAMAQVVAKEGDMVTLKLPSGEVRLFRKECYATIGQVGNVEANNISLGKAGRNRWKGRRPKVRGSVMNPVDHPHGGGEGRAPIGRPGPVTPWGKPTLGYKTRKKKKLSDALIVRRRKKSSKRGRGGRQS.

Basic and acidic residues predominate over residues 29–43 (PEKSLTRGFKRDKGR). Disordered stretches follow at residues 29 to 59 (PEKS…GGHK) and 210 to 288 (GRNR…GRQS). 2 stretches are compositionally biased toward basic residues: residues 210 to 221 (GRNRWKGRRPKV) and 272 to 288 (VRRR…GRQS).

Belongs to the universal ribosomal protein uL2 family. Part of the 50S ribosomal subunit. Forms a bridge to the 30S subunit in the 70S ribosome.

One of the primary rRNA binding proteins. Required for association of the 30S and 50S subunits to form the 70S ribosome, for tRNA binding and peptide bond formation. It has been suggested to have peptidyltransferase activity; this is somewhat controversial. Makes several contacts with the 16S rRNA in the 70S ribosome. This Thermosynechococcus vestitus (strain NIES-2133 / IAM M-273 / BP-1) protein is Large ribosomal subunit protein uL2.